A 300-amino-acid chain; its full sequence is Ribonuclease HIII (300 aa).

Residues 83 to 300 form the RNase H type-2 domain; it reads IPIIGSDEVG…THKAQALLTK (218 aa). 3 residues coordinate a divalent metal cation: aspartate 89, glutamate 90, and aspartate 194.

Belongs to the RNase HII family. RnhC subfamily. Mn(2+) is required as a cofactor. Requires Mg(2+) as cofactor.

The protein localises to the cytoplasm. It catalyses the reaction Endonucleolytic cleavage to 5'-phosphomonoester.. Its function is as follows. Endonuclease that specifically degrades the RNA of RNA-DNA hybrids. This Streptococcus pyogenes serotype M1 protein is Ribonuclease HIII.